A 453-amino-acid chain; its full sequence is tRNA modification GTPase MnmE (453 aa).

Residues Arg22, Glu79, and Lys119 each contribute to the (6S)-5-formyl-5,6,7,8-tetrahydrofolate site. The region spanning 215 to 376 (GMKVVIAGRP…LRQHLKECMG (162 aa)) is the TrmE-type G domain. Position 225 (Asn225) interacts with K(+). Residues 225-230 (NAGKSS), 244-250 (TDIAGTT), 269-272 (DTAG), and 334-337 (NKAD) contribute to the GTP site. Residue Ser229 coordinates Mg(2+). Positions 244, 246, and 249 each coordinate K(+). Thr250 is a Mg(2+) binding site. Residue Lys453 coordinates (6S)-5-formyl-5,6,7,8-tetrahydrofolate.

It belongs to the TRAFAC class TrmE-Era-EngA-EngB-Septin-like GTPase superfamily. TrmE GTPase family. In terms of assembly, homodimer. Heterotetramer of two MnmE and two MnmG subunits. It depends on K(+) as a cofactor.

The protein localises to the cytoplasm. In terms of biological role, exhibits a very high intrinsic GTPase hydrolysis rate. Involved in the addition of a carboxymethylaminomethyl (cmnm) group at the wobble position (U34) of certain tRNAs, forming tRNA-cmnm(5)s(2)U34. The protein is tRNA modification GTPase MnmE of Vibrio cholerae serotype O1 (strain ATCC 39315 / El Tor Inaba N16961).